Reading from the N-terminus, the 15639-residue chain is FR901469 synthetase (15639 aa).

The Carrier 1 domain occupies 5-81; the sequence is HTSDGLRKLL…DLVDKIIEQQ (77 aa). Ser-42 is modified (O-(pantetheine 4'-phosphoryl)serine). The segment covering 82-94 has biased composition (acidic residues); the sequence is LEEEEEDDDSLDN. The segment at 82–105 is disordered; it reads LEEEEEDDDSLDNESERDHSQKDL. The segment at 140–553 is condensation 1; it reads PCLSMQEGCL…RDFLPLTEDD (414 aa). The interval 579-971 is adenylation 1; it reads TISKQPDAVA…LGRRDTQVKI (393 aa). Residues 1108-1184 enclose the Carrier 2 domain; it reads TPATAIEKEL…ELALVARSTT (77 aa). Ser-1145 carries the post-translational modification O-(pantetheine 4'-phosphoryl)serine. The interval 1219-1626 is epimerase 1; the sequence is RSSNRFNQSV…TITHLVKRLA (408 aa). The tract at residues 1667 to 2097 is condensation 2; that stretch reads EDVLPCTPIQ…LGNLSLLTNN (431 aa). Residues 2122–2518 form an adenylation 2 region; sequence QEAAKEYTNA…GRRDNQIKIR (397 aa). Positions 2654–2730 constitute a Carrier 3 domain; the sequence is VPATALEKQL…ELALKAKSTT (77 aa). Residue Ser-2691 is modified to O-(pantetheine 4'-phosphoryl)serine. Residues 2761–3176 form an epimerase 2 region; sequence VSAGEHRYNQ…TELLHRLEQM (416 aa). Residues 3215–3640 form a condensation 3 region; it reads QDIYPCSPTQ…DDLIMMSPED (426 aa). The tract at residues 3669–4059 is adenylation 3; it reads TQPHAPAVAA…MGRIDSQIKI (391 aa). The region spanning 4193-4269 is the Carrier 4 domain; the sequence is PPSNDAERMV…QLAAIVTQRG (77 aa). Residue Ser-4230 is modified to O-(pantetheine 4'-phosphoryl)serine. The tract at residues 4316–4714 is condensation 4; sequence EDVYPCTPLQ…ILAHGTGLEE (399 aa). Positions 4756–5149 are adenylation 4; that stretch reads TEAASTRPDA…GRLDTQAKLR (394 aa). Residues 5284–5360 form the Carrier 5 domain; that stretch reads EPATIMERQL…DLASHIDHHT (77 aa). Ser-5321 carries the post-translational modification O-(pantetheine 4'-phosphoryl)serine. Residues 5402 to 5802 form a condensation 5 region; it reads EDIYPCTPLQ…TVFAQLCDSS (401 aa). An adenylation 5 region spans residues 5847-6238; sequence KYPNEPAVHA…LGRRDSQMKV (392 aa). The Carrier 6 domain occupies 6375–6451; sequence QPSTTAEIKL…DMAKIVEEHV (77 aa). Ser-6412 carries the O-(pantetheine 4'-phosphoryl)serine modification. The tract at residues 6494-6889 is condensation 6; it reads EDVYPATPLQ…RFAKVYQQLS (396 aa). Residues 6952-7335 are adenylation 6; it reads WDGSMTYAEL…GRRDTQIKIR (384 aa). The Carrier 7 domain maps to 7473-7546; that stretch reads TAMEEQLRTV…QLALLASTDE (74 aa). Ser-7507 carries the post-translational modification O-(pantetheine 4'-phosphoryl)serine. The epimerase 3 stretch occupies residues 7580–7992; sequence MGENRYNQSV…SKTLEELTTQ (413 aa). The segment at 8034–8459 is condensation 7; it reads EDVFPASPMQ…QRMRNISLAS (426 aa). Positions 8486 to 8882 are adenylation 7; it reads QKSVHARPDA…GRRDTQVKIR (397 aa). The region spanning 9015–9091 is the Carrier 8 domain; sequence QPATDAERQL…DLAKTIQDSE (77 aa). Residue Ser-9052 is modified to O-(pantetheine 4'-phosphoryl)serine. Positions 9136-9535 are condensation 8; the sequence is EDVYPCTPLQ…FAAIFRQLCD (400 aa). The interval 9583-9974 is adenylation 8; sequence KNPHAIAVNA…GRRDNQMKIR (392 aa). Residues 10110 to 10186 enclose the Carrier 9 domain; it reads EPATPMEMQL…GLAALIQKQI (77 aa). At Ser-10147 the chain carries O-(pantetheine 4'-phosphoryl)serine. The segment at 10186–10208 is disordered; the sequence is IDEEEEYDDSEEEEEDDEEEVRE. The span at 10187–10206 shows a compositional bias: acidic residues; the sequence is DEEEEYDDSEEEEEDDEEEV. The condensation 9 stretch occupies residues 10240–10662; that stretch reads VEDVYPCTPL…VLSETDKTKI (423 aa). Residues 10683 to 11082 form an adenylation 9 region; sequence KQAIERPNAP…GRRDTQIKIR (400 aa). The Carrier 10 domain maps to 11217–11293; it reads EPATGMERHL…DLARETESQG (77 aa). The residue at position 11254 (Ser-11254) is an O-(pantetheine 4'-phosphoryl)serine. Positions 11329 to 11725 are condensation 10; that stretch reads EDVYPCTPLQ…ETIFQQLSSV (397 aa). The tract at residues 11770 to 12165 is adenylation 10; sequence FKRTADKQPE…GRRDTQIKVR (396 aa). The Carrier 11 domain occupies 12298 to 12374; the sequence is EPSTEMERRI…DLAAAVQGRI (77 aa). Ser-12335 carries the O-(pantetheine 4'-phosphoryl)serine modification. The tract at residues 12418–12830 is condensation 11; that stretch reads EDVYPATPLQ…IQDIEMVSEQ (413 aa). The adenylation 11 stretch occupies residues 12861–13249; the sequence is SRADEIAICA…GRRDTQIKIR (389 aa). One can recognise a Carrier 12 domain in the interval 13383–13459; the sequence is MPGTVQEEQL…QLGQKVKEAV (77 aa). An O-(pantetheine 4'-phosphoryl)serine modification is found at Ser-13420. The interval 13476–13901 is epimerase 4; the sequence is APIQQMFFEQ…LKDMTSTLLQ (426 aa). The interval 13940-14369 is condensation 12; that stretch reads EDILPCSPIQ…SIVGEHDLQQ (430 aa). Positions 14390–14789 are adenylation 12; sequence RDAAHRTPDA…GRGDGQIKIR (400 aa). The region spanning 14916-14992 is the Carrier 13 domain; it reads LPASADEGAL…DMASVASAAR (77 aa). Ser-14953 carries the post-translational modification O-(pantetheine 4'-phosphoryl)serine. The tract at residues 15062-15433 is condensation 13; sequence QHAVDLAALK…DIMVRLASQQ (372 aa). Disordered regions lie at residues 15434–15511 and 15617–15639; these read EGTV…ENRQ and VQTN…KGHI. The span at 15455 to 15472 shows a compositional bias: low complexity; it reads NGTNGSNGDGTDAANGIG. The segment covering 15482–15494 has biased composition (basic and acidic residues); the sequence is AVEKSSGDAEVEK. The segment covering 15495–15511 has biased composition (polar residues); the sequence is VSTNGHADNNTSAENRQ.

This sequence belongs to the NRP synthetase family.

The protein operates within antifungal biosynthesis. Nonribosomal peptide synthetase; part of the gene cluster that mediates the biosynthesis of the antifungal antibiotic FR901469, an inhibitor of beta-1,3-glucansynthase, exerting antifungal activity against the pathogenes Candida albicans and Aspergillus fumigatus. FR901469 is a cyclic depsipeptide containing 12 amino acid residues and a fatty acid chain. The NRPS frbI contains 12 modules responsible for the formation of the depsipeptide backbone which is denoted as Acyl-Thr-Ala-Tyr-Val-4OHPro-Thr-Thr-3OHPro-threo3OHGln-Gly-Thr-Orn-OH (C71H116N14O23). The PKS frbB is probably involved in the production of the hydrocarbon chain, and the acyl-CoA ligase frbC might be involved in the transport of the chain to the peptide ptoduct of frbI. Because FR901469 contains 3 hydroxylated amino acid residues, the 3 oxygenases frbA, frbH, and frbJ might be participating in amino acid hydroxylation. As no thioesterase domains were detected in frbI or frbB, the thioesterases frbD and frbE may instead release and cyclize the products of the NRPS and PKS, respectively. This is FR901469 synthetase from Dothideomycetidae sp. (strain 11243) (Fungal sp. (strain No.11243)).